Reading from the N-terminus, the 62-residue chain is Large ribosomal subunit protein uL29 (62 aa).

The protein belongs to the universal ribosomal protein uL29 family.

The polypeptide is Large ribosomal subunit protein uL29 (Vesicomyosocius okutanii subsp. Calyptogena okutanii (strain HA)).